The primary structure comprises 155 residues: Ribonuclease 8 (155 aa).

Positions 1–28 (MAPARAGCCPLLLLLLLGLWVAEIPVSA) are cleaved as a signal peptide. 3 disulfides stabilise this stretch: Cys65-Cys119, Cys83-Cys134, and Cys90-Cys97. Substrate-binding positions include 66 to 70 (KDLNT) and Lys91. His150 functions as the Proton donor in the catalytic mechanism.

It belongs to the pancreatic ribonuclease family.

Its subcellular location is the secreted. Functionally, has a low ribonuclease activity. This chain is Ribonuclease 8 (RNASE8), found in Saguinus oedipus (Cotton-top tamarin).